Consider the following 263-residue polypeptide: Phosphoinositide-3-kinase-interacting protein 1 (263 aa).

A signal peptide spans 1-21; that stretch reads MLLAWVQAFLVSNMLLAEAYG. At 22–168 the chain is on the extracellular side; the sequence is SGGCFWDNGH…NSKEKKDLGT (147 aa). Positions 24 to 101 constitute a Kringle domain; sequence GCFWDNGHLY…EKRPCENLSC (78 aa). Cystine bridges form between C25/C101, C46/C82, and C70/C96. N-linked (GlcNAc...) asparagine glycosylation occurs at N98. The helical transmembrane segment at 169–189 threads the bilayer; sequence LGYVLGITMMVIIVAIGAGII. Topologically, residues 190 to 263 are cytoplasmic; sequence LGYSYKRGKD…LMGQAGTPGA (74 aa). Polar residues predominate over residues 242-251; it reads QTPVDPQEGS. Residues 242–263 are disordered; that stretch reads QTPVDPQEGSTPLMGQAGTPGA.

The protein localises to the cell membrane. Its function is as follows. Negative regulator of hepatic phosphatidylinositol 3-kinase (PI3K) activity. The polypeptide is Phosphoinositide-3-kinase-interacting protein 1 (PIK3IP1) (Pongo abelii (Sumatran orangutan)).